The sequence spans 209 residues: Streptogramin A acetyltransferase (209 aa).

The active site involves His-82.

The protein belongs to the transferase hexapeptide repeat family. In terms of assembly, homohexamer.

Its function is as follows. Inactivates the A compounds of streptogramin antibiotics by acetylation, thus providing resistance to these antibiotics. This Enterococcus faecium (Streptococcus faecium) protein is Streptogramin A acetyltransferase (vatD).